Here is an 870-residue protein sequence, read N- to C-terminus: Importin subunit beta-1 (870 aa).

N-acetylalanine is present on Ala2. HEAT repeat units lie at residues 4 to 33, 35 to 67, 87 to 126, 132 to 161, 172 to 204, 214 to 249, 255 to 304, 313 to 361, 365 to 395, 403 to 440, 456 to 492, 498 to 535, 542 to 588, 596 to 637, 642 to 679, 684 to 722, 730 to 776, and 826 to 868; these read EVTQ…FQEQ, LAGF…KNAL, MSTK…ELPQ, LIVS…LCEE, VNKI…YMAL, DMER…IAST, AHYM…EFAG, FTKQ…RAVG, VPHV…GSIL, LMAI…IFEF, CQQI…EDIG, TPFF…EVVR, STMV…QVII, TKSK…AYAA, AKYM…CRAL, LPYC…ALAI, WRYS…FQGF, and SHVG…TRAI. One can recognise an Importin N-terminal domain in the interval 23 to 103; that stretch reads AEESLKQFQE…RAFLLKTLSA (81 aa).

It belongs to the importin beta family. Importin beta-1 subfamily. As to quaternary structure, forms a complex with the importin subunits alpha IMPA1 or IMPA2, the nucleoporin NUP62 and the Ran-GTP-binding proteins RAN1, RAN2 or RAN3. Expressed in roots, cotyledons, leaves, stems, petals, stamen, stigma, siliques, embryos and guard cells.

Its subcellular location is the cytoplasm. The protein resides in the nucleus. Acts as a negative effector of drought tolerance. Involved in the regulation of stomatal closure and in the abscisic acid (ABA)-mediated pathway that lead to drought tolerance. Does not directly mediate nuclear import of ABI1 and ABI2 which are key regulators of the ABA signaling pathway. May be involved in nuclear translocation of other type 2C protein phosphatases that mediate ABA signaling. The chain is Importin subunit beta-1 from Arabidopsis thaliana (Mouse-ear cress).